The sequence spans 268 residues: MARTDRDRWDLATSVGATATMVAAQRALSSDANLIDDPYAAPLVRAVGIDVYVRLVDGEIQPGTSEFDPHRMAKGMACRTRFYDDFFLDAARAGVGQAVILASGLDARAYRLPWPAGTVVYEVDMPDVIEFKTLTLADLGAQPTAQRRTVAIDLRDDWAAALREERFDTQAPAAWSAEGLLVYLPEQAQDALFDNITALSAPGSRLAFDFVPDTAVFADPRWRAHHDRMSELGFEVDFNDLVYHGERSHIVDHLSGRGCSLVPLFRVG.

S-adenosyl-L-methionine contacts are provided by residues Asp124 and 153–154; that span reads DL.

It belongs to the UPF0677 family.

Its function is as follows. Exhibits S-adenosyl-L-methionine-dependent methyltransferase activity. This chain is Putative S-adenosyl-L-methionine-dependent methyltransferase MAP_0663, found in Mycolicibacterium paratuberculosis (strain ATCC BAA-968 / K-10) (Mycobacterium paratuberculosis).